The following is a 201-amino-acid chain: ATP synthase subunit delta (201 aa).

It belongs to the ATPase delta chain family. F-type ATPases have 2 components, F(1) - the catalytic core - and F(0) - the membrane proton channel. F(1) has five subunits: alpha(3), beta(3), gamma(1), delta(1), epsilon(1). F(0) has three main subunits: a(1), b(2) and c(10-14). The alpha and beta chains form an alternating ring which encloses part of the gamma chain. F(1) is attached to F(0) by a central stalk formed by the gamma and epsilon chains, while a peripheral stalk is formed by the delta and b chains.

Its subcellular location is the cell inner membrane. In terms of biological role, f(1)F(0) ATP synthase produces ATP from ADP in the presence of a proton or sodium gradient. F-type ATPases consist of two structural domains, F(1) containing the extramembraneous catalytic core and F(0) containing the membrane proton channel, linked together by a central stalk and a peripheral stalk. During catalysis, ATP synthesis in the catalytic domain of F(1) is coupled via a rotary mechanism of the central stalk subunits to proton translocation. Its function is as follows. This protein is part of the stalk that links CF(0) to CF(1). It either transmits conformational changes from CF(0) to CF(1) or is implicated in proton conduction. The protein is ATP synthase subunit delta of Xanthobacter autotrophicus (strain ATCC BAA-1158 / Py2).